A 185-amino-acid chain; its full sequence is Ribosome-recycling factor (185 aa).

This sequence belongs to the RRF family.

It localises to the cytoplasm. Its function is as follows. Responsible for the release of ribosomes from messenger RNA at the termination of protein biosynthesis. May increase the efficiency of translation by recycling ribosomes from one round of translation to another. The polypeptide is Ribosome-recycling factor (Desulfosudis oleivorans (strain DSM 6200 / JCM 39069 / Hxd3) (Desulfococcus oleovorans)).